The chain runs to 350 residues: Galactokinase (350 aa).

14-17 (EHTD) is a binding site for substrate. Residues serine 46 and 96-102 (GAGLSSS) each bind ATP. Mg(2+) contacts are provided by serine 102 and glutamate 134. Aspartate 146 acts as the Proton acceptor in catalysis. Tyrosine 196 provides a ligand contact to substrate.

This sequence belongs to the GHMP kinase family. GalK subfamily.

It is found in the cytoplasm. It carries out the reaction alpha-D-galactose + ATP = alpha-D-galactose 1-phosphate + ADP + H(+). It functions in the pathway carbohydrate metabolism; galactose metabolism. Catalyzes the transfer of the gamma-phosphate of ATP to D-galactose to form alpha-D-galactose-1-phosphate (Gal-1-P). This chain is Galactokinase, found in Thermotoga petrophila (strain ATCC BAA-488 / DSM 13995 / JCM 10881 / RKU-1).